Here is a 318-residue protein sequence, read N- to C-terminus: MDMRTTEQQYNPYRVFTRQQWAELRNDTPMTLEPGEFSKLRSMHDRLDLQEVEEIYLPLSRLLSMYVDAAQRLYYAQRQFLGIRDRKMPYIIGVAGSVSVGKSTTARVLQALLTRWSPRPKVDLITTDGFLYPNAVLERQGLMQKKGFPESYDLPRLLAFLSDIKAGRHPVRAPVYSHLSYDIVPNQWTEIDQPDILIVEGVNVLQTGPLPRDGKAVPVVSDFFDFSVYIDAEEAVLRRWYVKRFLSLRDTAFHDPRSYFNRYALLSDEEATATAIAIWERTNLANLEDNILPTRPRATLILKKGADHEIETVALRRL.

96 to 103 (GSVSVGKS) is a binding site for ATP.

It belongs to the prokaryotic pantothenate kinase family.

It is found in the cytoplasm. It carries out the reaction (R)-pantothenate + ATP = (R)-4'-phosphopantothenate + ADP + H(+). The protein operates within cofactor biosynthesis; coenzyme A biosynthesis; CoA from (R)-pantothenate: step 1/5. The protein is Pantothenate kinase of Bradyrhizobium sp. (strain ORS 278).